The following is a 221-amino-acid chain: Pleckstrin homology domain-containing family B member 2 (221 aa).

One can recognise a PH domain in the interval 2–109 (AFVKSGWLLR…WKFTLQDSRT (108 aa)). Residue Lys-20 participates in a 1,2-diacyl-sn-glycero-3-phospho-L-serine binding.

Highly expressed in brain, retina, heart and kidney. Detected at lower levels in lung, muscle and nerve.

It localises to the recycling endosome membrane. Functionally, involved in retrograde transport of recycling endosomes. The sequence is that of Pleckstrin homology domain-containing family B member 2 (Plekhb2) from Mus musculus (Mouse).